The primary structure comprises 203 residues: Probable chemoreceptor glutamine deamidase CheD (203 aa).

It belongs to the CheD family.

It catalyses the reaction L-glutaminyl-[protein] + H2O = L-glutamyl-[protein] + NH4(+). Its function is as follows. Probably deamidates glutamine residues to glutamate on methyl-accepting chemotaxis receptors (MCPs), playing an important role in chemotaxis. This chain is Probable chemoreceptor glutamine deamidase CheD, found in Herminiimonas arsenicoxydans.